Reading from the N-terminus, the 803-residue chain is Leucine--tRNA ligase (803 aa).

The short motif at 40–51 (PYPSGAGLHVGH) is the 'HIGH' region element. The short motif at 575-579 (KMSKS) is the 'KMSKS' region element. ATP is bound at residue Lys578.

It belongs to the class-I aminoacyl-tRNA synthetase family.

The protein localises to the cytoplasm. The catalysed reaction is tRNA(Leu) + L-leucine + ATP = L-leucyl-tRNA(Leu) + AMP + diphosphate. This chain is Leucine--tRNA ligase, found in Listeria monocytogenes serotype 4b (strain F2365).